Reading from the N-terminus, the 170-residue chain is Lipoprotein signal peptidase (170 aa).

Transmembrane regions (helical) follow at residues 12-32, 67-87, and 93-113; these read WYWVVVLVFVADQLSKQWVLA, WQRWLFTLVAVGFSTLLTVWL, and GLWRLNLAYTLVIGGALGNLI. Catalysis depends on residues aspartate 123 and aspartate 141. The chain crosses the membrane as a helical span at residues 133 to 153; sequence HFPAFNIADSAICVGAGLIIL.

This sequence belongs to the peptidase A8 family.

It localises to the cell inner membrane. The enzyme catalyses Release of signal peptides from bacterial membrane prolipoproteins. Hydrolyzes -Xaa-Yaa-Zaa-|-(S,diacylglyceryl)Cys-, in which Xaa is hydrophobic (preferably Leu), and Yaa (Ala or Ser) and Zaa (Gly or Ala) have small, neutral side chains.. Its pathway is protein modification; lipoprotein biosynthesis (signal peptide cleavage). Functionally, this protein specifically catalyzes the removal of signal peptides from prolipoproteins. The chain is Lipoprotein signal peptidase from Shewanella loihica (strain ATCC BAA-1088 / PV-4).